The primary structure comprises 84 residues: MAHKKGAGSTKNGRDSKPKMLGVKRFAGEKVNSGTIIVRQRGTHIHPGENVGLGRDYTIFATCEGVVKFEPTTNDRRKVSVVAD.

Residues Met-1–Leu-21 form a disordered region.

Belongs to the bacterial ribosomal protein bL27 family.

The protein is Large ribosomal subunit protein bL27 of Dehalococcoides mccartyi (strain ATCC BAA-2100 / JCM 16839 / KCTC 5957 / BAV1).